We begin with the raw amino-acid sequence, 117 residues long: Hainantoxin-XV-4 (117 aa).

Positions 1–20 (MKLCAVIIASLLVCVAVASS) are cleaved as a signal peptide. A disordered region spans residues 20-55 (SSDNQKEFAQEKEMTREETQSLGEHEKDDEVTGSEE). Residues 21-56 (SDNQKEFAQEKEMTREETQSLGEHEKDDEVTGSEER) constitute a propeptide that is removed on maturation. Basic and acidic residues predominate over residues 23 to 55 (NQKEFAQEKEMTREETQSLGEHEKDDEVTGSEE). Cystine bridges form between Cys-58-Cys-72, Cys-65-Cys-78, Cys-69-Cys-115, and Cys-71-Cys-91.

It belongs to the neurotoxin 03 (Tx2) family. 02 subfamily. HNTX-XV sub-subfamily. In terms of tissue distribution, expressed by the venom gland.

It localises to the secreted. In terms of biological role, putative ion channel inhibitor. This Cyriopagopus hainanus (Chinese bird spider) protein is Hainantoxin-XV-4.